We begin with the raw amino-acid sequence, 187 residues long: Shikimate kinase (187 aa).

Residue 18–23 participates in ATP binding; that stretch reads GCGKST. Serine 22 is a binding site for Mg(2+). Substrate-binding residues include aspartate 40, arginine 64, and glycine 86. Position 128 (arginine 128) interacts with ATP. Arginine 147 provides a ligand contact to substrate. Arginine 164 lines the ATP pocket.

It belongs to the shikimate kinase family. In terms of assembly, monomer. Requires Mg(2+) as cofactor.

The protein resides in the cytoplasm. It carries out the reaction shikimate + ATP = 3-phosphoshikimate + ADP + H(+). The protein operates within metabolic intermediate biosynthesis; chorismate biosynthesis; chorismate from D-erythrose 4-phosphate and phosphoenolpyruvate: step 5/7. Catalyzes the specific phosphorylation of the 3-hydroxyl group of shikimic acid using ATP as a cosubstrate. The polypeptide is Shikimate kinase (Rhodopirellula baltica (strain DSM 10527 / NCIMB 13988 / SH1)).